Consider the following 392-residue polypeptide: S-adenosylmethionine synthase (392 aa).

Residue His17 coordinates ATP. Asp19 is a Mg(2+) binding site. A K(+)-binding site is contributed by Glu45. Residues Glu58 and Gln102 each contribute to the L-methionine site. The tract at residues 102–112 is flexible loop; that stretch reads QSADIAQGVDA. ATP-binding positions include 169–171, 235–236, Asp244, 250–251, Ala267, and Lys271; these read DAK, KF, and RK. Asp244 lines the L-methionine pocket. Residue Lys275 participates in L-methionine binding.

The protein belongs to the AdoMet synthase family. In terms of assembly, homotetramer; dimer of dimers. Mg(2+) is required as a cofactor. The cofactor is K(+).

It localises to the cytoplasm. It carries out the reaction L-methionine + ATP + H2O = S-adenosyl-L-methionine + phosphate + diphosphate. The protein operates within amino-acid biosynthesis; S-adenosyl-L-methionine biosynthesis; S-adenosyl-L-methionine from L-methionine: step 1/1. In terms of biological role, catalyzes the formation of S-adenosylmethionine (AdoMet) from methionine and ATP. The overall synthetic reaction is composed of two sequential steps, AdoMet formation and the subsequent tripolyphosphate hydrolysis which occurs prior to release of AdoMet from the enzyme. The polypeptide is S-adenosylmethionine synthase (Methylobacterium radiotolerans (strain ATCC 27329 / DSM 1819 / JCM 2831 / NBRC 15690 / NCIMB 10815 / 0-1)).